A 641-amino-acid chain; its full sequence is Mannosyl-oligosaccharide 1,2-alpha-mannosidase IB (641 aa).

An N-acetylthreonine modification is found at threonine 2. At 2–36 (TTPALLPLSGRRIPPLNLGPPSFPHHRATLRLSEK) the chain is on the cytoplasmic side. A helical; Signal-anchor for type II membrane protein membrane pass occupies residues 37 to 57 (FILLLILSAFITLCFGAFFFL). Residues 58 to 641 (PDSSKHKRFD…TTLSGNPAVR (584 aa)) are Lumenal-facing. The disordered stretch occupies residues 153-175 (NKPLPPVPIPNLVGIRGGDPEDN). A disulfide bridge connects residues cysteine 462 and cysteine 494. Glutamate 508 functions as the Proton donor in the catalytic mechanism. Ca(2+) is bound at residue threonine 619. Asparagine 631 carries an N-linked (GlcNAc...) asparagine glycan.

This sequence belongs to the glycosyl hydrolase 47 family. Ca(2+) is required as a cofactor. Highest levels of expression in placenta and testis.

It localises to the golgi apparatus membrane. The catalysed reaction is N(4)-(alpha-D-Man-(1-&gt;2)-alpha-D-Man-(1-&gt;2)-alpha-D-Man-(1-&gt;3)-[alpha-D-Man-(1-&gt;2)-alpha-D-Man-(1-&gt;3)-[alpha-D-Man-(1-&gt;2)-alpha-D-Man-(1-&gt;6)]-alpha-D-Man-(1-&gt;6)]-beta-D-Man-(1-&gt;4)-beta-D-GlcNAc-(1-&gt;4)-beta-D-GlcNAc)-L-asparaginyl-[protein] (N-glucan mannose isomer 9A1,2,3B1,2,3) + 4 H2O = N(4)-(alpha-D-Man-(1-&gt;3)-[alpha-D-Man-(1-&gt;3)-[alpha-D-Man-(1-&gt;6)]-alpha-D-Man-(1-&gt;6)]-beta-D-Man-(1-&gt;4)-beta-D-GlcNAc-(1-&gt;4)-beta-D-GlcNAc)-L-asparaginyl-[protein] (N-glucan mannose isomer 5A1,2) + 4 beta-D-mannose. The enzyme catalyses N(4)-(alpha-D-Man-(1-&gt;2)-alpha-D-Man-(1-&gt;2)-alpha-D-Man-(1-&gt;3)-[alpha-D-Man-(1-&gt;3)-[alpha-D-Man-(1-&gt;2)-alpha-D-Man-(1-&gt;6)]-alpha-D-Man-(1-&gt;6)]-beta-D-Man-(1-&gt;4)-beta-D-GlcNAc-(1-&gt;4)-beta-D-GlcNAc)-L-asparaginyl-[protein] (N-glucan mannose isomer 8A1,2,3B1,3) + 3 H2O = N(4)-(alpha-D-Man-(1-&gt;3)-[alpha-D-Man-(1-&gt;3)-[alpha-D-Man-(1-&gt;6)]-alpha-D-Man-(1-&gt;6)]-beta-D-Man-(1-&gt;4)-beta-D-GlcNAc-(1-&gt;4)-beta-D-GlcNAc)-L-asparaginyl-[protein] (N-glucan mannose isomer 5A1,2) + 3 beta-D-mannose. Its pathway is protein modification; protein glycosylation. Inhibited by both 1-deoxymannojirimycin and kifunensine. Its function is as follows. Involved in the maturation of Asn-linked oligosaccharides. Progressively trim alpha-1,2-linked mannose residues from Man(9)GlcNAc(2) to produce Man(5)GlcNAc(2). This Homo sapiens (Human) protein is Mannosyl-oligosaccharide 1,2-alpha-mannosidase IB (MAN1A2).